The primary structure comprises 242 residues: MLAVEVSEAEGGIREWEEEEKEEEAAERTPTGEKSPNSPRTLLSLRGKARTGGPMEVKLELHPLQNRWALWFFKNDRSRAWQDNLHLVTKVDTVEDFWALYSHIQLASKLSSGCDYALFKDGIQPMWEDSRNKRGGRWLVSLAKQQRHIELDRLWLETLLCLIGESFEEHSREVCGAVVNIRTKGDKIAVWTREAENQAGVLHVGRVYKERLGLSPKTIIGYQAHADTATKSNSLAKNKFVV.

The interval 1–42 (MLAVEVSEAEGGIREWEEEEKEEEAAERTPTGEKSPNSPRTL) is disordered. Positions 16–25 (WEEEEKEEEA) are enriched in acidic residues. Residues 32-41 (GEKSPNSPRT) are compositionally biased toward polar residues. Residues 62–65 (HPLQ) are EIF4EBP1/2/3 binding. An mRNA-binding site is contributed by 81–82 (WQ). An EIF4EBP1/2/3 binding region spans residues 98–102 (WALYS). Residue 127 to 128 (WE) coordinates mRNA. The EIF4EBP1/2/3 binding stretch occupies residues 157-164 (ETLLCLIG). Residues 182–187 (RTKGDK) and 230–232 (TKS) contribute to the mRNA site.

Belongs to the eukaryotic initiation factor 4E family. As to quaternary structure, eIF4F is a multi-subunit complex, the composition of which varies with external and internal environmental conditions. It is composed of at least EIF4A, EIF4E and EIF4G.

Recognizes and binds the 7-methylguanosine-containing mRNA cap during an early step in the initiation of protein synthesis and facilitates ribosome binding by inducing the unwinding of the mRNAs secondary structure. The sequence is that of Eukaryotic translation initiation factor 4E type 1B (EIF4E1B) from Homo sapiens (Human).